The primary structure comprises 213 residues: Pyrrolidone-carboxylate peptidase (213 aa).

Catalysis depends on residues Glu78, Cys141, and His165.

This sequence belongs to the peptidase C15 family. Homotetramer.

It localises to the cytoplasm. The enzyme catalyses Release of an N-terminal pyroglutamyl group from a polypeptide, the second amino acid generally not being Pro.. Functionally, removes 5-oxoproline from various penultimate amino acid residues except L-proline. The protein is Pyrrolidone-carboxylate peptidase of Enterococcus faecalis (strain ATCC 700802 / V583).